Here is a 324-residue protein sequence, read N- to C-terminus: Phospho-N-acetylmuramoyl-pentapeptide-transferase (324 aa).

The next 10 membrane-spanning stretches (helical) occupy residues 5 to 25 (GLLVTAGVAFLISVALSPLFI), 52 to 72 (PTMGGIVIYVSMMVTSLIMAI), 77 to 97 (LGAEVSLLLLVTFGYGLIGFL), 122 to 142 (VIAIAFFFIGKGQAFHTYIMI), 149 to 169 (FELGWAYFVLVLFMLIGGSNA), 176 to 196 (LDGLLSGTAAIAFGAFSIIAV), 201 to 221 (FGVAIFCMAVVGAVLGFLVFN), 227 to 247 (VFMGDTGSLALGGAIAAVAIL), 253 to 273 (LLVIIGGVFVMETLSVIIQVI), and 302 to 322 (VVVTFWSVGFLLAVLGIYIGV).

The protein belongs to the glycosyltransferase 4 family. MraY subfamily. Mg(2+) is required as a cofactor.

The protein resides in the cell membrane. The enzyme catalyses UDP-N-acetyl-alpha-D-muramoyl-L-alanyl-gamma-D-glutamyl-meso-2,6-diaminopimeloyl-D-alanyl-D-alanine + di-trans,octa-cis-undecaprenyl phosphate = di-trans,octa-cis-undecaprenyl diphospho-N-acetyl-alpha-D-muramoyl-L-alanyl-D-glutamyl-meso-2,6-diaminopimeloyl-D-alanyl-D-alanine + UMP. It participates in cell wall biogenesis; peptidoglycan biosynthesis. Catalyzes the initial step of the lipid cycle reactions in the biosynthesis of the cell wall peptidoglycan: transfers peptidoglycan precursor phospho-MurNAc-pentapeptide from UDP-MurNAc-pentapeptide onto the lipid carrier undecaprenyl phosphate, yielding undecaprenyl-pyrophosphoryl-MurNAc-pentapeptide, known as lipid I. The chain is Phospho-N-acetylmuramoyl-pentapeptide-transferase from Bacillus anthracis.